Reading from the N-terminus, the 273-residue chain is 2,3,4,5-tetrahydropyridine-2,6-dicarboxylate N-succinyltransferase (273 aa).

Substrate-binding residues include arginine 104 and aspartate 141.

This sequence belongs to the transferase hexapeptide repeat family. In terms of assembly, homotrimer.

It is found in the cytoplasm. The enzyme catalyses (S)-2,3,4,5-tetrahydrodipicolinate + succinyl-CoA + H2O = (S)-2-succinylamino-6-oxoheptanedioate + CoA. It participates in amino-acid biosynthesis; L-lysine biosynthesis via DAP pathway; LL-2,6-diaminopimelate from (S)-tetrahydrodipicolinate (succinylase route): step 1/3. In Nitrosomonas europaea (strain ATCC 19718 / CIP 103999 / KCTC 2705 / NBRC 14298), this protein is 2,3,4,5-tetrahydropyridine-2,6-dicarboxylate N-succinyltransferase.